Here is a 320-residue protein sequence, read N- to C-terminus: Ferrochelatase (320 aa).

Residues His-194 and Glu-275 each coordinate Fe cation.

This sequence belongs to the ferrochelatase family.

It localises to the cytoplasm. The enzyme catalyses heme b + 2 H(+) = protoporphyrin IX + Fe(2+). It participates in porphyrin-containing compound metabolism; protoheme biosynthesis; protoheme from protoporphyrin-IX: step 1/1. Functionally, catalyzes the ferrous insertion into protoporphyrin IX. In Xylella fastidiosa (strain 9a5c), this protein is Ferrochelatase.